A 221-amino-acid polypeptide reads, in one-letter code: Small ribosomal subunit protein eS1 (221 aa).

It belongs to the eukaryotic ribosomal protein eS1 family.

The polypeptide is Small ribosomal subunit protein eS1 (Pyrobaculum aerophilum (strain ATCC 51768 / DSM 7523 / JCM 9630 / CIP 104966 / NBRC 100827 / IM2)).